A 313-amino-acid chain; its full sequence is tRNA dimethylallyltransferase (313 aa).

ATP is bound at residue 10–17 (GPTASGKT). 12–17 (TASGKT) provides a ligand contact to substrate. Interaction with substrate tRNA stretches follow at residues 35 to 38 (DSAM), 159 to 163 (QRIQR), and 240 to 245 (RCVGYR).

The protein belongs to the IPP transferase family. In terms of assembly, monomer. Mg(2+) is required as a cofactor.

The enzyme catalyses adenosine(37) in tRNA + dimethylallyl diphosphate = N(6)-dimethylallyladenosine(37) in tRNA + diphosphate. Catalyzes the transfer of a dimethylallyl group onto the adenine at position 37 in tRNAs that read codons beginning with uridine, leading to the formation of N6-(dimethylallyl)adenosine (i(6)A). The chain is tRNA dimethylallyltransferase from Legionella pneumophila (strain Lens).